Consider the following 481-residue polypeptide: Glutamyl-tRNA(Gln) amidotransferase subunit A (481 aa).

Catalysis depends on charge relay system residues Lys76 and Ser151. Ser175 acts as the Acyl-ester intermediate in catalysis.

The protein belongs to the amidase family. GatA subfamily. Heterotrimer of A, B and C subunits.

It carries out the reaction L-glutamyl-tRNA(Gln) + L-glutamine + ATP + H2O = L-glutaminyl-tRNA(Gln) + L-glutamate + ADP + phosphate + H(+). Functionally, allows the formation of correctly charged Gln-tRNA(Gln) through the transamidation of misacylated Glu-tRNA(Gln) in organisms which lack glutaminyl-tRNA synthetase. The reaction takes place in the presence of glutamine and ATP through an activated gamma-phospho-Glu-tRNA(Gln). This chain is Glutamyl-tRNA(Gln) amidotransferase subunit A, found in Neisseria meningitidis serogroup C / serotype 2a (strain ATCC 700532 / DSM 15464 / FAM18).